The chain runs to 269 residues: uncharacterized protein (269 aa).

The segment covering 181–191 has biased composition (basic and acidic residues); the sequence is QKKELSPHEIA. The tract at residues 181 to 203 is disordered; it reads QKKELSPHEIAESPSSHSTSPMG. Residues 193–202 show a composition bias toward polar residues; sequence SPSSHSTSPM. Position 200 is a phosphoserine (serine 200).

This is an uncharacterized protein from Schizosaccharomyces pombe (strain 972 / ATCC 24843) (Fission yeast).